Consider the following 351-residue polypeptide: tRNA pseudouridine synthase D (351 aa).

Catalysis depends on Asp81, which acts as the Nucleophile. The 147-residue stretch at 158–304 (GVPNYFGSQR…MRHERRAIEL (147 aa)) folds into the TRUD domain.

The protein belongs to the pseudouridine synthase TruD family.

It carries out the reaction uridine(13) in tRNA = pseudouridine(13) in tRNA. Functionally, responsible for synthesis of pseudouridine from uracil-13 in transfer RNAs. In Aliivibrio fischeri (strain ATCC 700601 / ES114) (Vibrio fischeri), this protein is tRNA pseudouridine synthase D.